A 167-amino-acid polypeptide reads, in one-letter code: Peptide deformylase (167 aa).

Fe cation-binding residues include C91 and H133. The active site involves E134. H137 lines the Fe cation pocket.

This sequence belongs to the polypeptide deformylase family. Fe(2+) serves as cofactor.

The catalysed reaction is N-terminal N-formyl-L-methionyl-[peptide] + H2O = N-terminal L-methionyl-[peptide] + formate. In terms of biological role, removes the formyl group from the N-terminal Met of newly synthesized proteins. Requires at least a dipeptide for an efficient rate of reaction. N-terminal L-methionine is a prerequisite for activity but the enzyme has broad specificity at other positions. The protein is Peptide deformylase of Pseudoalteromonas translucida (strain TAC 125).